The primary structure comprises 344 residues: UDP-3-O-acylglucosamine N-acyltransferase (344 aa).

His-248 (proton acceptor) is an active-site residue.

Belongs to the transferase hexapeptide repeat family. LpxD subfamily. Homotrimer.

The catalysed reaction is a UDP-3-O-[(3R)-3-hydroxyacyl]-alpha-D-glucosamine + a (3R)-hydroxyacyl-[ACP] = a UDP-2-N,3-O-bis[(3R)-3-hydroxyacyl]-alpha-D-glucosamine + holo-[ACP] + H(+). It functions in the pathway bacterial outer membrane biogenesis; LPS lipid A biosynthesis. Its function is as follows. Catalyzes the N-acylation of UDP-3-O-acylglucosamine using 3-hydroxyacyl-ACP as the acyl donor. Is involved in the biosynthesis of lipid A, a phosphorylated glycolipid that anchors the lipopolysaccharide to the outer membrane of the cell. This is UDP-3-O-acylglucosamine N-acyltransferase from Prochlorococcus marinus (strain MIT 9312).